The primary structure comprises 251 residues: Octanoyltransferase (251 aa).

In terms of domain architecture, BPL/LPL catalytic spans 56–241 (AETPDEIWIV…NLDGASAAAD (186 aa)). Residues 96–103 (RGGQITYH), 168–170 (ALG), and 181–183 (GLS) contribute to the substrate site. Cysteine 199 (acyl-thioester intermediate) is an active-site residue.

It belongs to the LipB family.

The protein localises to the cytoplasm. It catalyses the reaction octanoyl-[ACP] + L-lysyl-[protein] = N(6)-octanoyl-L-lysyl-[protein] + holo-[ACP] + H(+). Its pathway is protein modification; protein lipoylation via endogenous pathway; protein N(6)-(lipoyl)lysine from octanoyl-[acyl-carrier-protein]: step 1/2. In terms of biological role, catalyzes the transfer of endogenously produced octanoic acid from octanoyl-acyl-carrier-protein onto the lipoyl domains of lipoate-dependent enzymes. Lipoyl-ACP can also act as a substrate although octanoyl-ACP is likely to be the physiological substrate. This is Octanoyltransferase from Burkholderia vietnamiensis (strain G4 / LMG 22486) (Burkholderia cepacia (strain R1808)).